A 172-amino-acid polypeptide reads, in one-letter code: FMN reductase (NADH) RutF 2 (172 aa).

Belongs to the non-flavoprotein flavin reductase family. RutF subfamily.

It carries out the reaction FMNH2 + NAD(+) = FMN + NADH + 2 H(+). Its function is as follows. Catalyzes the reduction of FMN to FMNH2 which is used to reduce pyrimidine by RutA via the Rut pathway. This is FMN reductase (NADH) RutF 2 from Methylorubrum extorquens (strain PA1) (Methylobacterium extorquens).